The primary structure comprises 288 residues: Protease HtpX (288 aa).

2 helical membrane-spanning segments follow: residues isoleucine 4 to leucine 24 and valine 33 to methionine 53. Histidine 139 is a binding site for Zn(2+). Residue glutamate 140 is part of the active site. Histidine 143 contributes to the Zn(2+) binding site. Transmembrane regions (helical) follow at residues serine 146–isoleucine 166 and isoleucine 186–alanine 206. A Zn(2+)-binding site is contributed by glutamate 214.

This sequence belongs to the peptidase M48B family. Zn(2+) serves as cofactor.

The protein localises to the cell inner membrane. The sequence is that of Protease HtpX from Histophilus somni (strain 2336) (Haemophilus somnus).